The primary structure comprises 704 residues: Preterpestacin I synthase tpcA (704 aa).

The tract at residues 1–329 (MEQLSYQSKL…CSACPRQNAW (329 aa)) is terpene cyclase. Asp96 contacts Mg(2+). Substrate-binding positions include Asp96, Asn231, 235-239 (SWERE), and 325-326 (RQ). Positions 96–100 (DDGGE) match the DDXXD 1 motif. The NSE/DTE motif lies at 231 to 239 (NDYFSWERE). A prenyltransferase region spans residues 330 to 688 (KDMSSQSLNG…MLRLCLAKLS (359 aa)). The segment at 361 to 380 (KDSSFFGSQPSDDEPSLSEV) is disordered. 3 residues coordinate isopentenyl diphosphate: Lys406, Arg409, and His438. 2 residues coordinate Mg(2+): Asp445 and Asp449. The DDXXD 2 signature appears at 445-449 (DDLED). Arg454 contributes to the dimethylallyl diphosphate binding site. Arg455 is an isopentenyl diphosphate binding site. Positions 532, 533, 568, 575, 583, and 593 each coordinate dimethylallyl diphosphate.

In the N-terminal section; belongs to the terpene synthase family. The protein in the C-terminal section; belongs to the FPP/GGPP synthase family. As to quaternary structure, hexamer. Requires Mg(2+) as cofactor.

The enzyme catalyses isopentenyl diphosphate + (2E,6E)-farnesyl diphosphate = (2E,6E,10E)-geranylgeranyl diphosphate + diphosphate. The catalysed reaction is isopentenyl diphosphate + (2E,6E,10E)-geranylgeranyl diphosphate = (2E,6E,10E,14E)-geranylfarnesyl diphosphate + diphosphate. It functions in the pathway secondary metabolite biosynthesis; terpenoid biosynthesis. Functionally, bifunctional terpene synthase; part of the gene cluster that mediates the biosynthesis of terpestacin. The bifunctional terpene synthase tpcA converts isopentenyl diphosphate (IPP) and dimethylallyl diphosphate (DMAPP) into the sesterterpene preterpestacin I. The C-terminal prenyltransferase (PT) domain of tpcA catalyzes formation of GFPP, whereas the N-terminal terpene cyclase (TC) domain catalyzes the cyclization of GFPP into preterpestacin I. The cytochrome P450 monooxygenase tpcB then hydroxylates preterpestacin I to yield 24-hydroxypreterpstacin I (renamed as preterpestacin II) whereas the cytochrome P450 monooxygenase tpcC further hydroxylates preterpestacin II to yield 16,17-dihydroxypreterpestacin II (renamed as preterpestacin III). Finally, the FAD-dependent monooxygenase tpcD converts preterpestacin III into terpestacin. The chain is Preterpestacin I synthase tpcA from Cochliobolus heterostrophus (strain C5 / ATCC 48332 / race O) (Southern corn leaf blight fungus).